The chain runs to 921 residues: Sodium/calcium exchanger 2 (921 aa).

Positions 1–20 (MAPLALMGVVLLLGVPHCLG) are cleaved as a signal peptide. The disordered stretch occupies residues 23-42 (TPTPSLPPPTANDSDASPEG). Residues 69–89 (VARAVVYFVAMVYMFLGVSII) traverse the membrane as a helical segment. 2 N-linked (GlcNAc...) asparagine glycosylation sites follow: Asn-125 and Asn-130. Helical transmembrane passes span 131–151 (LTLMALGSSAPEILLTVIEVC), 165–185 (IVGSAAFNMFVVIAVCVYVIP), 197–217 (VFFVTASWSIFAYVWLYLILA), and 226–246 (VWEALLTLIFFPVCVVFAWMA). Residues 248 to 267 (KRLLFYKYVYKRYRTDPRSG) are putative calmodulin-binding region. Positions 371-391 (HAADAARRPGATDGAPDDEDD) are disordered. Calx-beta domains lie at 389-482 (EDDG…FVRL) and 512-611 (ATVT…FIEL). Positions 407, 443, 468, 469, 471, 473, 476, 518, 519, 520, 536, 598, 599, and 600 each coordinate Ca(2+). At Ser-622 the chain carries Phosphoserine. Glu-665 lines the Ca(2+) pocket. The next 6 helical transmembrane spans lie at 721-741 (CFDYVMHFLTVFWKVLFACVP), 749-769 (WACFGVCILVIGVLTALIGDL), 786-806 (VVFVALGTSIPDTFASKVAAL), 823-843 (AVNVFLGLGVAWSVAAVYWAV), 855-875 (LAFSVTLFTVFAFVCIAVLLY), and 893-913 (LATTALFLGLWFLYILFSSLE).

This sequence belongs to the Ca(2+):cation antiporter (CaCA) (TC 2.A.19) family. SLC8 subfamily. In terms of tissue distribution, detected in kidney cortex, in distal convoluted tubules and connecting segments. Detected in brain and spinal cord (at protein level). Detected in brain, especially in hippocampus CA1, CA2 and CA3 fiels, dentate gyrus, cerebellum and brain cortex.

It localises to the cell membrane. Its subcellular location is the basolateral cell membrane. The catalysed reaction is Ca(2+)(in) + 3 Na(+)(out) = Ca(2+)(out) + 3 Na(+)(in). Its activity is regulated as follows. Calcium transport is down-regulated by Na(+) and stimulated by Ca(2+). Its function is as follows. Mediates the electrogenic exchange of Ca(2+) against Na(+) ions across the cell membrane, and thereby contributes to the regulation of cytoplasmic Ca(2+) levels and Ca(2+)-dependent cellular processes. Contributes to cellular Ca(2+) homeostasis in excitable cells. Contributes to the rapid decrease of cytoplasmic Ca(2+) levels back to baseline after neuronal activation, and thereby contributes to modulate synaptic plasticity, learning and memory. Plays a role in regulating urinary Ca(2+) and Na(+) excretion. This chain is Sodium/calcium exchanger 2, found in Mus musculus (Mouse).